The following is a 298-amino-acid chain: Elongation factor Ts (298 aa).

The involved in Mg(2+) ion dislocation from EF-Tu stretch occupies residues Thr-79 to Val-82.

The protein belongs to the EF-Ts family.

The protein resides in the cytoplasm. In terms of biological role, associates with the EF-Tu.GDP complex and induces the exchange of GDP to GTP. It remains bound to the aminoacyl-tRNA.EF-Tu.GTP complex up to the GTP hydrolysis stage on the ribosome. The chain is Elongation factor Ts from Cereibacter sphaeroides (strain ATCC 17025 / ATH 2.4.3) (Rhodobacter sphaeroides).